Reading from the N-terminus, the 236-residue chain is Purine nucleoside phosphorylase DeoD-type (236 aa).

His4 lines the a purine D-ribonucleoside pocket. Phosphate-binding positions include Gly20, Arg24, Arg43, and 87-90; that span reads RVGT. Residues 178–180 and 202–203 contribute to the a purine D-ribonucleoside site; these read EME and SD. Asp203 serves as the catalytic Proton donor.

Belongs to the PNP/UDP phosphorylase family. As to quaternary structure, homohexamer; trimer of homodimers.

The catalysed reaction is a purine D-ribonucleoside + phosphate = a purine nucleobase + alpha-D-ribose 1-phosphate. It catalyses the reaction a purine 2'-deoxy-D-ribonucleoside + phosphate = a purine nucleobase + 2-deoxy-alpha-D-ribose 1-phosphate. Functionally, catalyzes the reversible phosphorolytic breakdown of the N-glycosidic bond in the beta-(deoxy)ribonucleoside molecules, with the formation of the corresponding free purine bases and pentose-1-phosphate. In Geobacillus kaustophilus (strain HTA426), this protein is Purine nucleoside phosphorylase DeoD-type.